Here is a 156-residue protein sequence, read N- to C-terminus: MSDPAKVRRHAERVRELVASVVRSQIKDPRLGMITITDARITADLRDATVFYTVLGDASAQASTAAALESAKGMVRSTVGKALGLRHSPTLTFVLDDVQDQVKHIDDLLAQARHADAEVQRLATRAEYAGEAQPYRLEEEPEGSGDEVPPPGGDQR.

A disordered region spans residues 124-156 (TRAEYAGEAQPYRLEEEPEGSGDEVPPPGGDQR).

Belongs to the RbfA family. Monomer. Binds 30S ribosomal subunits, but not 50S ribosomal subunits or 70S ribosomes.

The protein localises to the cytoplasm. Functionally, one of several proteins that assist in the late maturation steps of the functional core of the 30S ribosomal subunit. Associates with free 30S ribosomal subunits (but not with 30S subunits that are part of 70S ribosomes or polysomes). Required for efficient processing of 16S rRNA. May interact with the 5'-terminal helix region of 16S rRNA. The protein is Ribosome-binding factor A of Salinispora tropica (strain ATCC BAA-916 / DSM 44818 / JCM 13857 / NBRC 105044 / CNB-440).